The sequence spans 89 residues: Small ribosomal subunit protein uS15 (89 aa).

It belongs to the universal ribosomal protein uS15 family. Part of the 30S ribosomal subunit. Forms a bridge to the 50S subunit in the 70S ribosome, contacting the 23S rRNA.

Functionally, one of the primary rRNA binding proteins, it binds directly to 16S rRNA where it helps nucleate assembly of the platform of the 30S subunit by binding and bridging several RNA helices of the 16S rRNA. In terms of biological role, forms an intersubunit bridge (bridge B4) with the 23S rRNA of the 50S subunit in the ribosome. This is Small ribosomal subunit protein uS15 from Desulfotalea psychrophila (strain LSv54 / DSM 12343).